The following is a 346-amino-acid chain: Phosphoribosylformylglycinamidine cyclo-ligase (346 aa).

The protein belongs to the AIR synthase family.

It is found in the cytoplasm. It carries out the reaction 2-formamido-N(1)-(5-O-phospho-beta-D-ribosyl)acetamidine + ATP = 5-amino-1-(5-phospho-beta-D-ribosyl)imidazole + ADP + phosphate + H(+). It participates in purine metabolism; IMP biosynthesis via de novo pathway; 5-amino-1-(5-phospho-D-ribosyl)imidazole from N(2)-formyl-N(1)-(5-phospho-D-ribosyl)glycinamide: step 2/2. This Polaromonas sp. (strain JS666 / ATCC BAA-500) protein is Phosphoribosylformylglycinamidine cyclo-ligase.